The following is a 165-amino-acid chain: Large ribosomal subunit protein eL15 (165 aa).

The tract at residues 126–147 (TSAGRKSRGLGKGHKFHHTIGG) is disordered. Basic residues predominate over residues 130–143 (RKSRGLGKGHKFHH).

The protein belongs to the eukaryotic ribosomal protein eL15 family. In terms of assembly, component of the large ribosomal subunit.

It localises to the cytoplasm. In terms of biological role, component of the large ribosomal subunit. The ribosome is a large ribonucleoprotein complex responsible for the synthesis of proteins in the cell. The polypeptide is Large ribosomal subunit protein eL15 (RPL15) (Gallus gallus (Chicken)).